Reading from the N-terminus, the 482-residue chain is GPI mannosyltransferase 3 (482 aa).

The helical transmembrane segment at L12–Q32 threads the bilayer. Residue N80 is glycosylated (N-linked (GlcNAc...) asparagine). A run of 4 helical transmembrane segments spans residues K114–T134, F137–W155, I175–I195, and L199–L219. The N-linked (GlcNAc...) asparagine glycan is linked to N242. A run of 3 helical transmembrane segments spans residues W252–I272, G274–I294, and F324–E344.

It belongs to the glycosyltransferase 22 family. PIGB subfamily.

The protein resides in the endoplasmic reticulum membrane. It participates in glycolipid biosynthesis; glycosylphosphatidylinositol-anchor biosynthesis. Its function is as follows. Mannosyltransferase involved in glycosylphosphatidylinositol-anchor biosynthesis. Transfers the third mannose to Man2-GlcN-acyl-PI during GPI precursor assembly. This is GPI mannosyltransferase 3 (GPI10) from Candida albicans (strain SC5314 / ATCC MYA-2876) (Yeast).